Consider the following 510-residue polypeptide: MSGFNDSPVPESAEKADGLLSQERGTQDPLVNTRKLFVKSYGCQMNVYDAERMADLLAPEGYAETSAPEDADLVILNTCHIREHAAEKVFSELGKLRLLKAEQQAAGRPVKIVVAGCVAQAEGEEILRRQKAVDLVVGPQSYHRLPDLLRRVAHTPGLVDTEFPAEDKFDHLVAPQPEKIAERGVGAFVTVQEGCDKFCSFCVVPYTRGAETSRPVEAILAEVETLIASGVREVTLIGQNVNAYHGFDAMTGAPASLASLMARVAAMPGLLRIRYTTSHPNDMGEDLIAAHRDIPALMPFLHLPVQSGSDKILAAMNRRHKAGDYLELIASIRAARPDIALSSDFIVGFPGETEADFEATLALIEQVGFASAFSFKYSQRPGTPGADRPDQIDEDVKAQRLARLQALLEEQRQAFNKAMIGRVLPVLFEKPGRHPGQIAGKTPYLQALYAEGDKALIGTVQPVEILEAGPNSFHGRLLARETGQESAQGQESAQGMERMEQNARAWEVPV.

Residues 1 to 25 (MSGFNDSPVPESAEKADGLLSQERG) form a disordered region. The 121-residue stretch at 34-154 (RKLFVKSYGC…LPDLLRRVAH (121 aa)) folds into the MTTase N-terminal domain. Residues Cys-43, Cys-79, Cys-117, Cys-195, Cys-199, and Cys-202 each coordinate [4Fe-4S] cluster. The Radical SAM core domain maps to 181–414 (AERGVGAFVT…QALLEEQRQA (234 aa)). The TRAM domain maps to 417 to 479 (KAMIGRVLPV…PNSFHGRLLA (63 aa)). The segment covering 484 to 493 (QESAQGQESA) has biased composition (polar residues). The tract at residues 484–510 (QESAQGQESAQGMERMEQNARAWEVPV) is disordered.

It belongs to the methylthiotransferase family. MiaB subfamily. As to quaternary structure, monomer. It depends on [4Fe-4S] cluster as a cofactor.

Its subcellular location is the cytoplasm. The enzyme catalyses N(6)-dimethylallyladenosine(37) in tRNA + (sulfur carrier)-SH + AH2 + 2 S-adenosyl-L-methionine = 2-methylsulfanyl-N(6)-dimethylallyladenosine(37) in tRNA + (sulfur carrier)-H + 5'-deoxyadenosine + L-methionine + A + S-adenosyl-L-homocysteine + 2 H(+). Catalyzes the methylthiolation of N6-(dimethylallyl)adenosine (i(6)A), leading to the formation of 2-methylthio-N6-(dimethylallyl)adenosine (ms(2)i(6)A) at position 37 in tRNAs that read codons beginning with uridine. The sequence is that of tRNA-2-methylthio-N(6)-dimethylallyladenosine synthase from Beijerinckia indica subsp. indica (strain ATCC 9039 / DSM 1715 / NCIMB 8712).